Consider the following 259-residue polypeptide: Cell division protein DivIB (259 aa).

The Cytoplasmic segment spans residues 1 to 27 (MADGKVIDIEQKVPDFREQRRRKSRRR). The helical transmembrane segment at 28-45 (LVLYISILAFFLLFVYYF) threads the bilayer. Residues 46–259 (QSDYSTVGHV…QEEEEIEIEE (214 aa)) are Extracellular-facing. A POTRA domain is found at 50 to 118 (STVGHVDVYG…RSITLYVDEY (69 aa)).

Belongs to the FtsQ/DivIB family. DivIB subfamily.

The protein resides in the cell membrane. In terms of biological role, cell division protein that may be involved in stabilizing or promoting the assembly of the division complex. The polypeptide is Cell division protein DivIB (Bacillus selenitireducens (strain ATCC 700615 / DSM 15326 / MLS10)).